Here is a 378-residue protein sequence, read N- to C-terminus: Cytochrome b (378 aa).

The next 4 helical transmembrane spans lie at F34–M54, W78–V99, W114–L134, and F179–L199. Positions 84 and 98 each coordinate heme b. 2 residues coordinate heme b: H183 and H197. H202 lines the a ubiquinone pocket. The next 4 membrane-spanning stretches (helical) occupy residues F227–S247, L289–N309, I321–A341, and Y348–L368.

This sequence belongs to the cytochrome b family. In terms of assembly, the main subunits of complex b-c1 are: cytochrome b, cytochrome c1 and the Rieske protein. Heme b serves as cofactor.

The protein localises to the mitochondrion inner membrane. Its function is as follows. Component of the ubiquinol-cytochrome c reductase complex (complex III or cytochrome b-c1 complex) that is part of the mitochondrial respiratory chain. The b-c1 complex mediates electron transfer from ubiquinol to cytochrome c. Contributes to the generation of a proton gradient across the mitochondrial membrane that is then used for ATP synthesis. This is Cytochrome b (mt:Cyt-b) from Drosophila mauritiana (Fruit fly).